Reading from the N-terminus, the 194-residue chain is MPTPALTRYSMQNLSVDQYLRAHIRTVPDWPAPGVQFRDITPLLQDAKVFRVLIDAFIHRYMDPSIRPDVVAGLDARGFILGAVVAYELNVGFVPIRKKGKLPFTTVEETYELEYGSATVELHTDAVKPGDRVLLIDDLIATGGTMMAGMKLLEKLGAQVIEGAAIVDLPELGGSDKLRASGLALFTLLDFSGH.

It belongs to the purine/pyrimidine phosphoribosyltransferase family. As to quaternary structure, homodimer.

It is found in the cytoplasm. It catalyses the reaction AMP + diphosphate = 5-phospho-alpha-D-ribose 1-diphosphate + adenine. It participates in purine metabolism; AMP biosynthesis via salvage pathway; AMP from adenine: step 1/1. Functionally, catalyzes a salvage reaction resulting in the formation of AMP, that is energically less costly than de novo synthesis. This Albidiferax ferrireducens (strain ATCC BAA-621 / DSM 15236 / T118) (Rhodoferax ferrireducens) protein is Adenine phosphoribosyltransferase.